The sequence spans 85 residues: Large ribosomal subunit protein bL27 (85 aa).

This sequence belongs to the bacterial ribosomal protein bL27 family.

This chain is Large ribosomal subunit protein bL27, found in Persephonella marina (strain DSM 14350 / EX-H1).